Consider the following 310-residue polypeptide: tRNA-dihydrouridine(16) synthase (310 aa).

FMN-binding positions include 7 to 9 (PMQ) and glutamine 68. The Proton donor role is filled by cysteine 98. FMN-binding positions include lysine 139, 200-202 (NGE), and 224-225 (GR).

This sequence belongs to the Dus family. DusC subfamily. It depends on FMN as a cofactor.

It catalyses the reaction 5,6-dihydrouridine(16) in tRNA + NADP(+) = uridine(16) in tRNA + NADPH + H(+). It carries out the reaction 5,6-dihydrouridine(16) in tRNA + NAD(+) = uridine(16) in tRNA + NADH + H(+). Its function is as follows. Catalyzes the synthesis of 5,6-dihydrouridine (D), a modified base found in the D-loop of most tRNAs, via the reduction of the C5-C6 double bond in target uridines. Specifically modifies U16 in tRNAs. The chain is tRNA-dihydrouridine(16) synthase from Haemophilus influenzae (strain ATCC 51907 / DSM 11121 / KW20 / Rd).